Reading from the N-terminus, the 2145-residue chain is U5 small nuclear ribonucleoprotein 200 kDa helicase (2145 aa).

Disordered regions lie at residues 54–82 and 202–243; these read GDRAIKGKAPVQDQKKKRKKKDDEKAQQF and DSDE…GDGH. The span at 220–231 shows a compositional bias: acidic residues; that stretch reads SEEESEEEEGVD. The Helicase ATP-binding 1 domain occupies 484–667; that stretch reads DSALRSKEHL…FLRVKPEHLH (184 aa). 497-504 provides a ligand contact to ATP; sequence APTGAGKT. Residues 609–612 carry the DEAH box motif; that stretch reads DEIH. Positions 677–894 constitute a Helicase C-terminal domain; that stretch reads PLEQQYIGVT…QMVSRLTDML (218 aa). The 304-residue stretch at 975 to 1278 folds into the SEC63 1 domain; the sequence is TELGRIASHF…IGAETVLPIS (304 aa). Positions 1331 to 1506 constitute a Helicase ATP-binding 2 domain; sequence RTVFESNENV…WLGCSASATF (176 aa). Position 1344-1351 (1344-1351) interacts with ATP; the sequence is APNGSGKT. The DEAH box signature appears at 1448 to 1451; sequence DDLH. An SEC63 2 domain is found at 1812 to 2124; that stretch reads LNLGMIASYY…YLGADQEFDV (313 aa).

This sequence belongs to the helicase family. SKI2 subfamily.

Its subcellular location is the nucleus. It carries out the reaction ATP + H2O = ADP + phosphate + H(+). In terms of biological role, catalyzes the ATP-dependent unwinding of U4/U6 RNA duplices, an essential step in the assembly of a catalytically active spliceosome. Plays a role in pre-mRNA splicing. The sequence is that of U5 small nuclear ribonucleoprotein 200 kDa helicase from Caenorhabditis elegans.